The following is a 529-amino-acid chain: Chaperonin GroEL, chloroplastic (529 aa).

Residues 29-32 (TLGP), 86-90 (DGTTT), Gly-414, 480-482 (DAA), and Asp-496 each bind ATP.

Belongs to the chaperonin (HSP60) family. As to quaternary structure, forms a cylinder of 14 subunits composed of two heptameric rings stacked back-to-back. Interacts with the co-chaperonin GroES.

It is found in the plastid. The protein resides in the chloroplast. It carries out the reaction ATP + H2O + a folded polypeptide = ADP + phosphate + an unfolded polypeptide.. Together with its co-chaperonin GroES, plays an essential role in assisting protein folding. The GroEL-GroES system forms a nano-cage that allows encapsulation of the non-native substrate proteins and provides a physical environment optimized to promote and accelerate protein folding. In Guillardia theta (Cryptophyte), this protein is Chaperonin GroEL, chloroplastic.